Reading from the N-terminus, the 488-residue chain is UDP-N-acetylmuramate--L-alanine ligase (488 aa).

127-133 lines the ATP pocket; the sequence is GTHGKTT.

It belongs to the MurCDEF family.

It localises to the cytoplasm. The catalysed reaction is UDP-N-acetyl-alpha-D-muramate + L-alanine + ATP = UDP-N-acetyl-alpha-D-muramoyl-L-alanine + ADP + phosphate + H(+). It functions in the pathway cell wall biogenesis; peptidoglycan biosynthesis. In terms of biological role, cell wall formation. In Shewanella oneidensis (strain ATCC 700550 / JCM 31522 / CIP 106686 / LMG 19005 / NCIMB 14063 / MR-1), this protein is UDP-N-acetylmuramate--L-alanine ligase.